We begin with the raw amino-acid sequence, 107 residues long: Small ribosomal subunit protein eS25 (107 aa).

Residues Met1–Lys35 form a disordered region. Positions Ser8 to Gly20 are enriched in low complexity. A compositionally biased stretch (basic residues) spans Lys21–Lys35.

This sequence belongs to the eukaryotic ribosomal protein eS25 family.

This is Small ribosomal subunit protein eS25 (RPS25) from Candida glabrata (strain ATCC 2001 / BCRC 20586 / JCM 3761 / NBRC 0622 / NRRL Y-65 / CBS 138) (Yeast).